The following is a 315-amino-acid chain: Methionyl-tRNA formyltransferase (315 aa).

113-116 (SLLP) provides a ligand contact to (6S)-5,6,7,8-tetrahydrofolate.

This sequence belongs to the Fmt family.

The catalysed reaction is L-methionyl-tRNA(fMet) + (6R)-10-formyltetrahydrofolate = N-formyl-L-methionyl-tRNA(fMet) + (6S)-5,6,7,8-tetrahydrofolate + H(+). Its function is as follows. Attaches a formyl group to the free amino group of methionyl-tRNA(fMet). The formyl group appears to play a dual role in the initiator identity of N-formylmethionyl-tRNA by promoting its recognition by IF2 and preventing the misappropriation of this tRNA by the elongation apparatus. This chain is Methionyl-tRNA formyltransferase, found in Erwinia tasmaniensis (strain DSM 17950 / CFBP 7177 / CIP 109463 / NCPPB 4357 / Et1/99).